The primary structure comprises 677 residues: WD and tetratricopeptide repeats protein 1 (677 aa).

WD repeat units follow at residues 45–84 (GHSG…KLLS), 88–129 (GHTA…TIHM), 132–172 (DHTN…KHSE), 182–222 (GQLV…NHRK), and 265–305 (RLRV…RPYT). Serine 353 is subject to Phosphoserine. TPR repeat units follow at residues 362 to 395 (LERV…APHN) and 397 to 432 (MLYG…NPCH). The disordered stretch occupies residues 487-509 (NDGEEKKGPGGGAPVRLRSTSRK). Phosphoserine is present on serine 511. WD repeat units lie at residues 535–575 (NTTT…LVRV) and 578–617 (GDES…EDLT). The tract at residues 655-677 (SSGGAGASDDEDSSEGQVQCRPS) is disordered.

Its pathway is protein modification; protein ubiquitination. In terms of biological role, may function as a substrate receptor for CUL4-DDB1 E3 ubiquitin-protein ligase complex. The chain is WD and tetratricopeptide repeats protein 1 (WDTC1) from Homo sapiens (Human).